We begin with the raw amino-acid sequence, 432 residues long: Tyrosine-protein phosphatase non-receptor type 1 (432 aa).

Met-1 bears the N-acetylmethionine mark. The Tyrosine-protein phosphatase domain maps to 3 to 277; sequence MEKEFEEIDK…RFSYLAVIEG (275 aa). The residue at position 20 (Tyr-20) is a Phosphotyrosine. A Phosphoserine; by CLK1, CLK2 and PKB/AKT1 or PKB/AKT2 modification is found at Ser-50. Tyr-66 carries the phosphotyrosine; by EGFR modification. Substrate contacts are provided by residues Asp-181 and 215-221; that span reads CSAGIGR. Cys-215 acts as the Phosphocysteine intermediate in catalysis. Cys-215 bears the Cysteine persulfide mark. An S-nitrosocysteine; in reversibly inhibited form modification is found at Cys-215. Phosphoserine; by CLK1 and CLK2 is present on residues Ser-242 and Ser-243. Gln-262 contacts substrate. 2 disordered regions span residues 297 to 322 and 335 to 399; these read EDLD…PHNG and SEET…EEHK. Phosphoserine is present on residues Ser-335, Ser-362, and Ser-364. The span at 354 to 364 shows a compositional bias: low complexity; that stretch reads SSAMHSVSSMS. Thr-367 is modified (phosphothreonine).

The protein belongs to the protein-tyrosine phosphatase family. Non-receptor class 1 subfamily. In terms of assembly, interacts with EPHA3 (phosphorylated); dephosphorylates EPHA3 and may regulate its trafficking and function. Interacts with MET. Interacts with NCK1. Ser-50 is the major site of phosphorylation as compared to Ser-242 and Ser-243. Activated by phosphorylation at Ser-50. In terms of processing, S-nitrosylation of Cys-215 inactivates the enzyme activity. Post-translationally, sulfhydration at Cys-215 following endoplasmic reticulum stress inactivates the enzyme activity, promoting EIF2AK3/PERK activity. Most abundant in testis. Also found in kidney, spleen, muscle, liver, heart and brain.

The protein resides in the endoplasmic reticulum membrane. It carries out the reaction O-phospho-L-tyrosyl-[protein] + H2O = L-tyrosyl-[protein] + phosphate. Tyrosine-protein phosphatase which acts as a regulator of endoplasmic reticulum unfolded protein response. Mediates dephosphorylation of EIF2AK3/PERK; inactivating the protein kinase activity of EIF2AK3/PERK. May play an important role in CKII- and p60c-src-induced signal transduction cascades. May regulate the EFNA5-EPHA3 signaling pathway which modulates cell reorganization and cell-cell repulsion. May also regulate the hepatocyte growth factor receptor signaling pathway through dephosphorylation of MET. The chain is Tyrosine-protein phosphatase non-receptor type 1 (Ptpn1) from Mus musculus (Mouse).